The following is a 144-amino-acid chain: Acylphosphatase-like protein MJ1331 (144 aa).

The 93-residue stretch at 8–100 (TYELRIYGNV…FPNGLNKIST (93 aa)) folds into the Acylphosphatase-like domain.

In Methanocaldococcus jannaschii (strain ATCC 43067 / DSM 2661 / JAL-1 / JCM 10045 / NBRC 100440) (Methanococcus jannaschii), this protein is Acylphosphatase-like protein MJ1331.